We begin with the raw amino-acid sequence, 700 residues long: Lutropin-choriogonadotropic hormone receptor (700 aa).

An N-terminal signal peptide occupies residues 1 to 26 (MGRRVPALRQLLVLAMLVLKQSQLHS). Topologically, residues 27–362 (PELSGSRCPE…AFNPCEDIMG (336 aa)) are extracellular. The LRR 1 repeat unit spans residues 52-75 (RAGLARLSLTYLPVKVIPSQAFRG). A glycan (N-linked (GlcNAc...) asparagine) is linked at asparagine 103. LRR repeat units follow at residues 126 to 150 (LPRL…KISS), 176 to 200 (MNNE…AFNG), and 225 to 248 (ATGP…GLES). 2 N-linked (GlcNAc...) asparagine glycosylation sites follow: asparagine 178 and asparagine 199. Residues asparagine 295, asparagine 303, and asparagine 317 are each glycosylated (N-linked (GlcNAc...) asparagine). Tyrosine 335 is modified (sulfotyrosine). A helical transmembrane segment spans residues 363-390 (YAFLRVLIWLINILAIFGNLTVLFVLLT). Topologically, residues 391–399 (SRYKLTVPR) are cytoplasmic. The chain crosses the membrane as a helical span at residues 400–422 (FLMCNLSFADFCMGLYLLLIASV). Topologically, residues 423–443 (DSQTKGQYYNHAIDWQTGSGC) are extracellular. A disulfide bridge links cysteine 443 with cysteine 518. The chain crosses the membrane as a helical span at residues 444 to 466 (SAAGFFTVFASELSVYTLTVITL). The Cytoplasmic portion of the chain corresponds to 467-486 (ERWHTITYAVQLDQKLRLRH). The helical transmembrane segment at 487–509 (AIPIMLGGWIFSTLMATLPLVGV) threads the bilayer. Residues 510-529 (SSYMKVSICLPMDVESTLSQ) are Extracellular-facing. Residues 530 to 551 (VYILSILLLNAVAFVVICACYV) form a helical membrane-spanning segment. Residues 552-574 (RIYFAVQNPELTAPNKDTKIAKK) lie on the Cytoplasmic side of the membrane. The helical transmembrane segment at 575-598 (MAILIFTDFTCMAPISFFAISAAF) threads the bilayer. Topologically, residues 599 to 609 (KVPLITVTNSK) are extracellular. Residues 610-631 (VLLVLFYPVNSCANPFLYAVFT) form a helical membrane-spanning segment. Over 632–700 (KAFQRDFFLL…QPTPPRVLIQ (69 aa)) the chain is Cytoplasmic. S-palmitoyl cysteine attachment occurs at residues cysteine 647 and cysteine 648.

It belongs to the G-protein coupled receptor 1 family. FSH/LSH/TSH subfamily. Post-translationally, sulfated.

The protein resides in the cell membrane. In terms of biological role, receptor for lutropin-choriogonadotropic hormone. The activity of this receptor is mediated by G proteins which activate adenylate cyclase. The sequence is that of Lutropin-choriogonadotropic hormone receptor (Lhcgr) from Mus musculus (Mouse).